The sequence spans 339 residues: N-acetyl-gamma-glutamyl-phosphate reductase (339 aa).

Residue Cys145 is part of the active site.

This sequence belongs to the NAGSA dehydrogenase family. Type 1 subfamily.

It localises to the cytoplasm. It carries out the reaction N-acetyl-L-glutamate 5-semialdehyde + phosphate + NADP(+) = N-acetyl-L-glutamyl 5-phosphate + NADPH + H(+). It participates in amino-acid biosynthesis; L-arginine biosynthesis; N(2)-acetyl-L-ornithine from L-glutamate: step 3/4. Catalyzes the NADPH-dependent reduction of N-acetyl-5-glutamyl phosphate to yield N-acetyl-L-glutamate 5-semialdehyde. The chain is N-acetyl-gamma-glutamyl-phosphate reductase from Thermotoga sp. (strain RQ2).